Reading from the N-terminus, the 563-residue chain is Secreted lipase ARB07186/07185 (563 aa).

Residues 1-20 (MAKYDFVMLWILTLTAAIAA) form the signal peptide. A disulfide bridge connects residues Cys-83 and Cys-101. Ser-215 (acyl-ester intermediate) is an active-site residue. A disulfide bridge connects residues Cys-268 and Cys-281.

It belongs to the type-B carboxylesterase/lipase family.

The protein localises to the secreted. It carries out the reaction a triacylglycerol + H2O = a diacylglycerol + a fatty acid + H(+). The protein is Secreted lipase ARB07186/07185 of Arthroderma benhamiae (strain ATCC MYA-4681 / CBS 112371) (Trichophyton mentagrophytes).